The chain runs to 283 residues: Protoheme IX farnesyltransferase (283 aa).

9 helical membrane passes run 6-26 (LLLT…AGFL), 35-55 (FGLF…GCVF), 85-105 (AIVF…FYTN), 106-126 (LLTL…YSIW), 131-151 (VYGT…GYCA), 160-180 (AFIL…SIAI), 207-227 (ILLY…FHFT), 230-250 (LYLI…LRGL), and 262-282 (MFRF…FDLV).

It belongs to the UbiA prenyltransferase family. Protoheme IX farnesyltransferase subfamily.

Its subcellular location is the cell inner membrane. It carries out the reaction heme b + (2E,6E)-farnesyl diphosphate + H2O = Fe(II)-heme o + diphosphate. The protein operates within porphyrin-containing compound metabolism; heme O biosynthesis; heme O from protoheme: step 1/1. In terms of biological role, converts heme B (protoheme IX) to heme O by substitution of the vinyl group on carbon 2 of heme B porphyrin ring with a hydroxyethyl farnesyl side group. The sequence is that of Protoheme IX farnesyltransferase from Protochlamydia amoebophila (strain UWE25).